Consider the following 225-residue polypeptide: uncharacterized protein (225 aa).

The region spanning 114-219 (DAEAIIMQVY…RLSVTMRRII (106 aa)) is the Fe2OG dioxygenase domain.

It belongs to the iron/ascorbate-dependent oxidoreductase family.

It localises to the cytoplasm. The protein resides in the nucleus. This is an uncharacterized protein from Schizosaccharomyces pombe (strain 972 / ATCC 24843) (Fission yeast).